A 455-amino-acid chain; its full sequence is GTPase Der (455 aa).

EngA-type G domains are found at residues 4–169 (PIVA…PKDQ) and 178–355 (LRVS…GQHQ). GTP-binding positions include 10 to 17 (GRPNVGKS), 57 to 61 (DTGGL), 120 to 123 (NKLE), 184 to 191 (GRPNVGKS), 233 to 237 (DTAGI), and 298 to 301 (NKWD). Residues 356-441 (RRVSTSVLNE…PVRFIFRGKP (86 aa)) enclose the KH-like domain.

This sequence belongs to the TRAFAC class TrmE-Era-EngA-EngB-Septin-like GTPase superfamily. EngA (Der) GTPase family. In terms of assembly, associates with the 50S ribosomal subunit.

Functionally, GTPase that plays an essential role in the late steps of ribosome biogenesis. The protein is GTPase Der of Gloeobacter violaceus (strain ATCC 29082 / PCC 7421).